A 467-amino-acid chain; its full sequence is MTRVLSVASECVPLVKTGGLADVAGALPAALAGQGVGMRVLLPGYPAVLGAAAKTPVLREIPDLFGGPARIRRGALGKAVLYILDAPHLFDRPGGIYLGPDGRDWPDNPQRFAALCKAAALIAAEGVEDWRPQVLHLHDWQAGLTPIYLRQAGVRDVRTLLTIHNIAFQGLAPAHMLSALQLPAHLFNPSGFEYWGRISALKAGIVFADKVSTVSPTYAEELMTPEFGMGMEGVLADRAGDFTGILNGIDLDAWKPPYATPQGKAPHRAALRKEFGLPETDGPLCVVVSRLTGQKGLDLLIEALPALLENGGQLAVLGSGDPGLEAAFAKAAARHAGVALRLGYDEALSRRMIAGGDAILVPSRFEPCGLTQLYGLRFGTLPLVALTGGLADTVINASVAGLAAGVATGVQFHPVDARTLSRALTRLCALWHQPAAWQRMMDNAMAHPVGWDASARAYAELFEAMAA.

K16 is an ADP-alpha-D-glucose binding site.

The protein belongs to the glycosyltransferase 1 family. Bacterial/plant glycogen synthase subfamily.

The catalysed reaction is [(1-&gt;4)-alpha-D-glucosyl](n) + ADP-alpha-D-glucose = [(1-&gt;4)-alpha-D-glucosyl](n+1) + ADP + H(+). Its pathway is glycan biosynthesis; glycogen biosynthesis. Its function is as follows. Synthesizes alpha-1,4-glucan chains using ADP-glucose. In Paracoccus denitrificans (strain Pd 1222), this protein is Glycogen synthase.